The primary structure comprises 150 residues: SKP1-like protein 17 (150 aa).

Positions 92-150 (LDAADYLIVIGLKNLIAQAIADYTADKTVNEIRELFNIENDYTPEEEEELRKKNEWAFN) are interaction with the F-box domain of F-box proteins.

This sequence belongs to the SKP1 family. As to quaternary structure, part of a SCF (SKP1-cullin-F-box) protein ligase complex. Interacts with CPR1/CPR30. Mainly detected in the siliques.

The protein localises to the nucleus. It participates in protein modification; protein ubiquitination. Its function is as follows. Involved in ubiquitination and subsequent proteasomal degradation of target proteins. Together with CUL1, RBX1 and a F-box protein, it forms a SCF E3 ubiquitin ligase complex. The functional specificity of this complex depends on the type of F-box protein. In the SCF complex, it serves as an adapter that links the F-box protein to CUL1. Probably implicated in incompatibility response after hybridization. This chain is SKP1-like protein 17 (ASK17), found in Arabidopsis thaliana (Mouse-ear cress).